We begin with the raw amino-acid sequence, 84 residues long: Small ribosomal subunit protein bS18 (84 aa).

Belongs to the bacterial ribosomal protein bS18 family. In terms of assembly, part of the 30S ribosomal subunit. Forms a tight heterodimer with protein bS6.

Binds as a heterodimer with protein bS6 to the central domain of the 16S rRNA, where it helps stabilize the platform of the 30S subunit. This Dictyoglomus turgidum (strain DSM 6724 / Z-1310) protein is Small ribosomal subunit protein bS18.